Here is a 231-residue protein sequence, read N- to C-terminus: mRNA-decapping enzyme subunit 1 (231 aa).

Residues 92-120 (QNGSNNIQVNNGSDNSNRNSSGNGNSYKS) are disordered. Over residues 101 to 120 (NNGSDNSNRNSSGNGNSYKS) the composition is skewed to low complexity.

Belongs to the DCP1 family. Component of the decapping complex composed of DCP1 and DCP2. Interacts with mRNAs, DHH1, LSM1, LSM2, LSM3, LSM4, LSM5, LSM6, LSM7, and the cap-binding proteins PAB1 and TIF4632/eIF-4G. Phosphorylated.

The protein resides in the cytoplasm. Its subcellular location is the P-body. Component of the decapping complex necessary for the degradation of mRNAs, both in normal mRNA turnover and in nonsense-mediated mRNA decay. Removes the 7-methyl guanine cap structure from mRNA molecules, yielding a 5'-phosphorylated mRNA fragment and 7m-GDP. Decapping is the major pathway of mRNA degradation in yeast. It occurs through deadenylation, decapping and subsequent 5' to 3' exonucleolytic decay of the transcript body. DCP1 is activated by the DEAD-box helicase DHH1 and destabilizes the eIF-4F cap-binding complex from the mRNA. The sequence is that of mRNA-decapping enzyme subunit 1 (DCP1) from Saccharomyces cerevisiae (strain ATCC 204508 / S288c) (Baker's yeast).